A 464-amino-acid polypeptide reads, in one-letter code: Protein btn-1 (464 aa).

The first 22 residues, 1-22, serve as a signal peptide directing secretion; sequence MNRSPSSSGLLPLPGAPSSSWA. 10 consecutive transmembrane segments (helical) span residues 38–58, 73–93, 102–122, 129–149, 167–187, 190–210, 288–308, 332–352, 354–374, and 376–396; these read AVFI…VIIL, VVLL…PYFI, IFIF…TPPS, LIGV…FLGL, GAGL…GLSV, SLLA…LILP, SLFF…YTIN, PFYG…IAFI, IHHL…LTLH, and LLNF…EGLL.

This sequence belongs to the battenin family.

The protein resides in the vacuole membrane. Its function is as follows. Involved in vacuolar transport and vacuole pH homeostasis. Also required for cytokinesis. In Neurospora crassa (strain ATCC 24698 / 74-OR23-1A / CBS 708.71 / DSM 1257 / FGSC 987), this protein is Protein btn-1 (cln3).